Consider the following 334-residue polypeptide: Aspartate carbamoyltransferase catalytic subunit (334 aa).

Carbamoyl phosphate contacts are provided by Arg71 and Thr72. L-aspartate is bound at residue Lys99. 3 residues coordinate carbamoyl phosphate: Arg121, His151, and Gln154. Arg184 and Arg239 together coordinate L-aspartate. Residues Gly280 and Pro281 each coordinate carbamoyl phosphate.

Belongs to the aspartate/ornithine carbamoyltransferase superfamily. ATCase family. Heterododecamer (2C3:3R2) of six catalytic PyrB chains organized as two trimers (C3), and six regulatory PyrI chains organized as three dimers (R2).

It carries out the reaction carbamoyl phosphate + L-aspartate = N-carbamoyl-L-aspartate + phosphate + H(+). It participates in pyrimidine metabolism; UMP biosynthesis via de novo pathway; (S)-dihydroorotate from bicarbonate: step 2/3. In terms of biological role, catalyzes the condensation of carbamoyl phosphate and aspartate to form carbamoyl aspartate and inorganic phosphate, the committed step in the de novo pyrimidine nucleotide biosynthesis pathway. The sequence is that of Aspartate carbamoyltransferase catalytic subunit from Pseudomonas putida (Arthrobacter siderocapsulatus).